The chain runs to 333 residues: 5-formaminoimidazole-4-carboxamide-1-(beta)-D-ribofuranosyl 5'-monophosphate synthetase (333 aa).

2 residues coordinate 5-amino-1-(5-phospho-beta-D-ribosyl)imidazole-4-carboxamide: histidine 10 and serine 70. An ATP-grasp domain is found at 91–324 (KEVLKWESDR…IAREIKIAIE (234 aa)). Residues 121–181 (PDDI…VPIY) and glutamate 203 contribute to the ATP site. Position 231 (asparagine 231) interacts with 5-amino-1-(5-phospho-beta-D-ribosyl)imidazole-4-carboxamide. Mg(2+)-binding residues include glutamate 269 and glutamate 282.

It belongs to the phosphohexose mutase family. Mg(2+) serves as cofactor. The cofactor is Mn(2+).

The enzyme catalyses 5-amino-1-(5-phospho-beta-D-ribosyl)imidazole-4-carboxamide + formate + ATP = 5-formamido-1-(5-phospho-D-ribosyl)imidazole-4-carboxamide + ADP + phosphate. Its pathway is purine metabolism; IMP biosynthesis via de novo pathway; 5-formamido-1-(5-phospho-D-ribosyl)imidazole-4-carboxamide from 5-amino-1-(5-phospho-D-ribosyl)imidazole-4-carboxamide (formate route): step 1/1. Catalyzes the ATP- and formate-dependent formylation of 5-aminoimidazole-4-carboxamide-1-beta-d-ribofuranosyl 5'-monophosphate (AICAR) to 5-formaminoimidazole-4-carboxamide-1-beta-d-ribofuranosyl 5'-monophosphate (FAICAR) in the absence of folates. In Pyrococcus horikoshii (strain ATCC 700860 / DSM 12428 / JCM 9974 / NBRC 100139 / OT-3), this protein is 5-formaminoimidazole-4-carboxamide-1-(beta)-D-ribofuranosyl 5'-monophosphate synthetase.